The primary structure comprises 112 residues: Iron-sulfur cluster insertion protein ErpA (112 aa).

Residues Cys40, Cys104, and Cys106 each coordinate iron-sulfur cluster.

The protein belongs to the HesB/IscA family. As to quaternary structure, homodimer. Requires iron-sulfur cluster as cofactor.

Required for insertion of 4Fe-4S clusters for at least IspG. The sequence is that of Iron-sulfur cluster insertion protein ErpA from Pseudoalteromonas translucida (strain TAC 125).